A 191-amino-acid chain; its full sequence is Fe/S biogenesis protein NfuA (191 aa).

2 residues coordinate [4Fe-4S] cluster: Cys149 and Cys152.

Belongs to the NfuA family. Homodimer. The cofactor is [4Fe-4S] cluster.

In terms of biological role, involved in iron-sulfur cluster biogenesis. Binds a 4Fe-4S cluster, can transfer this cluster to apoproteins, and thereby intervenes in the maturation of Fe/S proteins. Could also act as a scaffold/chaperone for damaged Fe/S proteins. The chain is Fe/S biogenesis protein NfuA from Buchnera aphidicola subsp. Baizongia pistaciae (strain Bp).